A 257-amino-acid polypeptide reads, in one-letter code: Transmembrane protein C257L (257 aa).

The next 2 helical transmembrane spans lie at 123-143 (LELL…FTAL) and 163-183 (MMIF…YVLV).

It belongs to the asfivirus C257R family.

It localises to the host membrane. It is found in the virion. The polypeptide is Transmembrane protein C257L (African swine fever virus (strain Badajoz 1971 Vero-adapted) (Ba71V)).